Here is a 243-residue protein sequence, read N- to C-terminus: DNA repair protein RecO (243 aa).

Belongs to the RecO family.

Involved in DNA repair and RecF pathway recombination. The chain is DNA repair protein RecO from Beutenbergia cavernae (strain ATCC BAA-8 / DSM 12333 / CCUG 43141 / JCM 11478 / NBRC 16432 / NCIMB 13614 / HKI 0122).